The chain runs to 317 residues: Ribosomal large subunit pseudouridine synthase D (317 aa).

The S4 RNA-binding domain occupies 15–89; it reads WRLDRALASL…IPLEIVFEDE (75 aa). Residue D141 is part of the active site.

It belongs to the pseudouridine synthase RluA family.

Its subcellular location is the cytoplasm. The catalysed reaction is uridine(1911/1915/1917) in 23S rRNA = pseudouridine(1911/1915/1917) in 23S rRNA. Responsible for synthesis of pseudouridine from uracil at positions 1911, 1915 and 1917 in 23S ribosomal RNA. This Zymomonas mobilis subsp. mobilis (strain ATCC 31821 / ZM4 / CP4) protein is Ribosomal large subunit pseudouridine synthase D.